A 101-amino-acid polypeptide reads, in one-letter code: Small ribosomal subunit protein uS14A (101 aa).

A disordered region spans residues 31-69; it reads IAAPGSSPEERAAAQQELRRQPRDASATRLRNRDAVDGR. Residues 38–53 show a composition bias toward basic and acidic residues; the sequence is PEERAAAQQELRRQPR.

It belongs to the universal ribosomal protein uS14 family. In terms of assembly, part of the 30S ribosomal subunit. Contacts proteins S3 and S10.

Functionally, binds 16S rRNA, required for the assembly of 30S particles and may also be responsible for determining the conformation of the 16S rRNA at the A site. The chain is Small ribosomal subunit protein uS14A from Saccharopolyspora erythraea (strain ATCC 11635 / DSM 40517 / JCM 4748 / NBRC 13426 / NCIMB 8594 / NRRL 2338).